A 239-amino-acid chain; its full sequence is Ribosomal RNA small subunit methyltransferase G (239 aa).

S-adenosyl-L-methionine contacts are provided by residues G77, F82, 128–129 (AE), and R147.

It belongs to the methyltransferase superfamily. RNA methyltransferase RsmG family.

Its subcellular location is the cytoplasm. In terms of biological role, specifically methylates the N7 position of guanine in position 535 of 16S rRNA. The protein is Ribosomal RNA small subunit methyltransferase G of Bacillus cereus (strain G9842).